Reading from the N-terminus, the 111-residue chain is Dormancy-associated protein 1 (111 aa).

A disordered region spans residues 30-60 (KDDGASNQLMRSTSIPTTPTTPVTPTTPSSA). Residues 41 to 59 (STSIPTTPTTPVTPTTPSS) show a composition bias toward low complexity.

It belongs to the DRM1/ARP family. As to expression, expressed in axilary buds and in non-growing stems and roots. Detected in sepals, stamens and carpels, but barely detected in petals or leaflets.

The protein is Dormancy-associated protein 1 of Pisum sativum (Garden pea).